Here is a 544-residue protein sequence, read N- to C-terminus: Chaperonin GroEL (544 aa).

Residues 30–33 (TLGP), Lys51, 87–91 (DGTTT), Gly415, and Asp495 each bind ATP.

Belongs to the chaperonin (HSP60) family. Forms a cylinder of 14 subunits composed of two heptameric rings stacked back-to-back. Interacts with the co-chaperonin GroES.

It localises to the cytoplasm. It catalyses the reaction ATP + H2O + a folded polypeptide = ADP + phosphate + an unfolded polypeptide.. In terms of biological role, together with its co-chaperonin GroES, plays an essential role in assisting protein folding. The GroEL-GroES system forms a nano-cage that allows encapsulation of the non-native substrate proteins and provides a physical environment optimized to promote and accelerate protein folding. In Methylobacillus flagellatus (strain ATCC 51484 / DSM 6875 / VKM B-1610 / KT), this protein is Chaperonin GroEL.